Consider the following 304-residue polypeptide: Recombination-associated protein RdgC (304 aa).

It belongs to the RdgC family.

The protein resides in the cytoplasm. It localises to the nucleoid. Functionally, may be involved in recombination. In Paraburkholderia phymatum (strain DSM 17167 / CIP 108236 / LMG 21445 / STM815) (Burkholderia phymatum), this protein is Recombination-associated protein RdgC.